Consider the following 200-residue polypeptide: ADP-ribosylation factor-like protein 4A (200 aa).

A lipid anchor (N-myristoyl glycine) is attached at G2. GTP-binding positions include 27 to 34 (GLDCAGKT), 75 to 79 (DVGGQ), and 134 to 137 (NKQD).

The protein belongs to the small GTPase superfamily. Arf family. Interacts with CYTH2. Interacts with KPNA2; the interaction is direct. Does not interact with ARL4A. Post-translationally, myristoylated.

Its subcellular location is the cell membrane. The protein localises to the cytoplasm. It localises to the nucleus. The protein resides in the nucleolus. Its function is as follows. Small GTP-binding protein which cycles between an inactive GDP-bound and an active GTP-bound form, and the rate of cycling is regulated by guanine nucleotide exchange factors (GEF) and GTPase-activating proteins (GAP). GTP-binding protein that does not act as an allosteric activator of the cholera toxin catalytic subunit. Recruits CYTH1, CYTH2, CYTH3 and CYTH4 to the plasma membrane in GDP-bound form. The protein is ADP-ribosylation factor-like protein 4A (ARL4A) of Homo sapiens (Human).